The sequence spans 900 residues: Nonribosomal peptide synthetase AMT10 (900 aa).

The interval 284-686 (KQAQQNPAAM…ARRNGYIKLR (403 aa)) is adenylation. The region spanning 824–900 (ELQSDMERYL…QMARNCSLLD (77 aa)) is the Carrier domain. Residue S861 is modified to O-(pantetheine 4'-phosphoryl)serine.

This sequence belongs to the NRP synthetase family.

It functions in the pathway mycotoxin biosynthesis. In terms of biological role, nonribosomal peptide synthetase; part of the gene clusters that mediate the biosynthesis of AM-toxins, host-selective toxins (HSTs) causing Alternaria blotch on apple, a worldwide distributed disease. AM-toxins are cyclic depsipeptides containing the 3 residues 2-hydroxy-isovaleric acid (2-HIV), dehydroalanine, L-alanine which are common for all 3 AM-toxins I to III. The fourth precursor is L-alpha-amino-methoxyphenyl-valeric acid (L-Amv) for AM-toxin I, L-alpha-amino-phenyl-valeric acid (L-Apv) for AM-toxin II, and L-alpha-amino-hydroxyphenyl-valeric acid (L-Ahv) for AM-toxin III. AM-toxins have two target sites for affecting susceptible apple cells; they cause invagination of the plasma membrane and electrolyte loss and chloroplast disorganization. The non-ribosomal peptide synthetase AMT1 contains 4 catalytic modules and is responsible for activation of each residue in AM-toxin. The aldo-keto reductase AMT2 catalyzes the conversion of 2-keto-isovaleric acid (2-KIV) to 2-hydroxy-isovaleric acid (2-HIV), one of the precursor residues incorporated by AMT1 during AM-toxin biosynthesis, by reduction of its ketone to an alcohol. The cytochrome P450 monooxygenase AMT3 and the thioesterase AMT4 are also important for AM-toxin production, but their exact function within the AM-toxin biosynthesis are not known yet. Up to 21 proteins (including AMT1 to AMT4) are predicted to be involved in AM-toxin biosynthesis since their expression ishighly up-regulated in AM-toxin-producing cultures. The sequence is that of Nonribosomal peptide synthetase AMT10 from Alternaria alternata (Alternaria rot fungus).